We begin with the raw amino-acid sequence, 339 residues long: Phenylalanine--tRNA ligase alpha subunit (339 aa).

The span at 1 to 14 (MEAKLKQLEEKAKQ) shows a compositional bias: basic and acidic residues. The disordered stretch occupies residues 1 to 20 (MEAKLKQLEEKAKQDIQAST). A Mg(2+)-binding site is contributed by glutamate 254.

This sequence belongs to the class-II aminoacyl-tRNA synthetase family. Phe-tRNA synthetase alpha subunit type 1 subfamily. Tetramer of two alpha and two beta subunits. Mg(2+) serves as cofactor.

The protein localises to the cytoplasm. The catalysed reaction is tRNA(Phe) + L-phenylalanine + ATP = L-phenylalanyl-tRNA(Phe) + AMP + diphosphate + H(+). The protein is Phenylalanine--tRNA ligase alpha subunit of Alkaliphilus metalliredigens (strain QYMF).